Reading from the N-terminus, the 616-residue chain is Probable galacturonosyltransferase 4 (616 aa).

At 1-6 (MMVKLR) the chain is on the cytoplasmic side. The chain crosses the membrane as a helical; Signal-anchor for type II membrane protein span at residues 7–29 (NLVLFFMLLTVVAHILLYTDPAA). The Lumenal portion of the chain corresponds to 30–616 (SFKTPFSKRD…VYLRECNINP (587 aa)). Residues 132–152 (QTSEKVDEQPEPNAFGAKKDT) are disordered. 5 N-linked (GlcNAc...) asparagine glycosylation sites follow: Asn-291, Asn-326, Asn-378, Asn-481, and Asn-514.

It belongs to the glycosyltransferase 8 family. Expressed in roots, inflorescences, siliques, leaves and stems.

It is found in the golgi apparatus membrane. Its pathway is glycan metabolism; pectin biosynthesis. Its function is as follows. May be involved in pectin and/or xylans biosynthesis in cell walls. In Arabidopsis thaliana (Mouse-ear cress), this protein is Probable galacturonosyltransferase 4 (GAUT4).